A 191-amino-acid polypeptide reads, in one-letter code: Photosystem I assembly protein Ycf4 (191 aa).

2 helical membrane-spanning segments follow: residues 33-53 and 74-94; these read LLAV…LSSY and LVMG…WAMI.

It belongs to the Ycf4 family.

The protein localises to the cellular thylakoid membrane. Its function is as follows. Seems to be required for the assembly of the photosystem I complex. This Prochlorococcus marinus (strain MIT 9303) protein is Photosystem I assembly protein Ycf4.